The primary structure comprises 282 residues: Putative hydrolase Bcen_5340 (282 aa).

3 residues coordinate Mg(2+): E124, E126, and D155.

Belongs to the FAH family. Requires Mg(2+) as cofactor.

The chain is Putative hydrolase Bcen_5340 from Burkholderia orbicola (strain AU 1054).